The sequence spans 424 residues: L-glutamine:2-deoxy-scyllo-inosose aminotransferase (424 aa).

Lys202 is modified (N6-(pyridoxal phosphate)lysine).

Belongs to the DegT/DnrJ/EryC1 family. L-glutamine:2-deoxy-scyllo-inosose/scyllo-inosose aminotransferase subfamily. Pyridoxal 5'-phosphate serves as cofactor.

It carries out the reaction 2-deoxy-L-scyllo-inosose + L-glutamine = 2-deoxy-scyllo-inosamine + 2-oxoglutaramate. The enzyme catalyses 3-amino-2,3-dideoxy-scyllo-inosose + L-glutamine = 2-deoxystreptamine + 2-oxoglutaramate. The protein operates within metabolic intermediate biosynthesis; 2-deoxystreptamine biosynthesis; 2-deoxystreptamine from D-glucose 6-phosphate: step 2/4. It participates in metabolic intermediate biosynthesis; 2-deoxystreptamine biosynthesis; 2-deoxystreptamine from D-glucose 6-phosphate: step 4/4. It functions in the pathway antibiotic biosynthesis; ribostamycin biosynthesis. Functionally, catalyzes the PLP-dependent transamination of 2-deoxy-scyllo-inosose (2-DOI) to form 2-deoxy-scyllo-inosamine (2-DOIA) using L-glutamine as the amino donor. Also catalyzes the transamination of 3-amino-2,3-dideoxy-scyllo-inosose (keto-2-DOIA) into 2-deoxystreptamine (2-DOS). The protein is L-glutamine:2-deoxy-scyllo-inosose aminotransferase (rbmB) of Streptomyces ribosidificus.